A 76-amino-acid chain; its full sequence is MKLINLVPVFFVLIIVVDYCHSLPFFLLSLIPSAISAIKKIGKRSVESQRYVDLNRRDLEQDLQELQDFLDQISEH.

The signal sequence occupies residues 1-22; sequence MKLINLVPVFFVLIIVVDYCHS. At Ile-41 the chain carries Isoleucine amide. Residues 42–76 constitute a propeptide that is removed on maturation; it reads GKRSVESQRYVDLNRRDLEQDLQELQDFLDQISEH.

The protein belongs to the non-disulfide-bridged peptide (NDBP) superfamily. Short antimicrobial peptide (group 4) family. Expressed by the venom gland.

Its subcellular location is the secreted. The protein resides in the target cell membrane. Its function is as follows. Antimicrobial peptide with potent activity against Gram-positive bacteria S.aureus (MIC=2.5 uM) and S.agalactiaea (MIC=2.5 uM), and Gram-negative bacteria E.coli (MIC=24 uM) and P.aeruginosa (MIC=2.5 uM), as well as against yeasts Candida albicans (MIC=6.25 uM) and C.glabrata (MIC&gt;50 uM). Also elicits high hemolysis on human erythrocytes (HC(50)=9.2 uM). In Mesomexovis punctatus (Scorpion), this protein is VpAmp1.0.